Consider the following 92-residue polypeptide: MKLCVTVLSLLVLVAAFCSLALSAPMGSDPPTACCFSYTARKLPRNFVVDYYETSSLCSQPAVVFQTKRGKQVCADPSESWVQEYVYDLELN.

The first 23 residues, 1-23 (MKLCVTVLSLLVLVAAFCSLALS), serve as a signal peptide directing secretion. 2 disulfides stabilise this stretch: C34–C58 and C35–C74.

The protein belongs to the intercrine beta (chemokine CC) family. In terms of assembly, interacts with CCR5. In terms of tissue distribution, detected in B-cells.

The protein resides in the secreted. Chemokine that induces chemotaxis of cells expressing CCR5 or CCR1. Inhibits HIV replication in peripheral blood monocytes that express CCR5. This chain is C-C motif chemokine 4-like (CCL4L1), found in Homo sapiens (Human).